We begin with the raw amino-acid sequence, 3146 residues long: Bassianolide nonribosomal cyclodepsipeptide synthetase (3146 aa).

Positions 1-12 are enriched in polar residues; sequence MEPPNNANTGQL. The segment at 1–23 is disordered; it reads MEPPNNANTGQLGPTLPNGTVDL. The segment at 69–454 is condensation 1; that stretch reads HVVYEIPEDV…INKLQSTDGS (386 aa). The adenylation 1 stretch occupies residues 495–887; it reads GDTPNKPAVC…GRMDSQVKIR (393 aa). A Carrier 1 domain is found at 1015–1091; it reads PDASAGVTKL…SLQAAIGGSS (77 aa). The residue at position 1052 (Ser-1052) is an O-(pantetheine 4'-phosphoryl)serine. The segment at 1109 to 1538 is condensation 2; that stretch reads SYSQGRLWFL…QTLISVVPLT (430 aa). The segment at 1567–1973 is adenylation 2; it reads FRTQVASYPD…GRMDFQFKIR (407 aa). Residues 2041-2181 form an S-adenosyl-L-methionine-dependent N-methyltransferase (MT) region; sequence TYTELDTVSS…FPTRDYLERV (141 aa). Carrier domains follow at residues 2514 to 2588 and 2614 to 2688; these read FPLS…RQQL and APTT…EVSQ. O-(pantetheine 4'-phosphoryl)serine occurs at positions 2548 and 2648. The condensation 3 stretch occupies residues 2734 to 3138; that stretch reads QDVYLATHLQ…THLMEQVCNT (405 aa).

The protein belongs to the NRP synthetase family.

It carries out the reaction 4 (R)-2-hydroxy-3-methylbutanoate + 4 L-leucine + 4 S-adenosyl-L-methionine + 8 ATP = bassianolide + 8 AMP + 4 S-adenosyl-L-homocysteine + 8 diphosphate + 8 H(+). Bassianolide nonribosomal synthetase that mediates the biosynthesis of bassianolide (BSL), a non-ribosomal cyclodepsipeptide that shows insecticidal and cancer cell antiproliferative activity. BSLS first catalyzes the iterative synthesis of an enzyme-bound dipeptidol monomer intermediate from D-2-hydroxyisovalerate and L-leucine before performing the condensation and cyclization of 4 dipeptidol monomers to yield the cyclic tetrameric ester bassianolide. The N-methyltransferase MT domain is responsible for the methylation of the leucine residues of bassianolide. BSLS is flexible with both the amino acid and hydroxyl acid precursors, and produces bassianolide as the major product (containing N-methyl-L-Leu), together with small amounts of beauvericin and its analogs beauvericins A-C (containing N-methyl-L-Phe). In Beauveria bassiana (White muscardine disease fungus), this protein is Bassianolide nonribosomal cyclodepsipeptide synthetase.